A 204-amino-acid polypeptide reads, in one-letter code: Paraneoplastic antigen-like protein 8C (204 aa).

The interval 135–204 (PPATGPRELP…RRHHASDKKL (70 aa)) is disordered. The span at 182–204 (VGKRGKRKNKKNRRRHHASDKKL) shows a compositional bias: basic residues.

The protein belongs to the PNMA family.

In Homo sapiens (Human), this protein is Paraneoplastic antigen-like protein 8C.